The chain runs to 422 residues: Exodeoxyribonuclease 7 large subunit (422 aa).

It belongs to the XseA family. As to quaternary structure, heterooligomer composed of large and small subunits.

Its subcellular location is the cytoplasm. The enzyme catalyses Exonucleolytic cleavage in either 5'- to 3'- or 3'- to 5'-direction to yield nucleoside 5'-phosphates.. In terms of biological role, bidirectionally degrades single-stranded DNA into large acid-insoluble oligonucleotides, which are then degraded further into small acid-soluble oligonucleotides. The chain is Exodeoxyribonuclease 7 large subunit from Leptospira interrogans serogroup Icterohaemorrhagiae serovar copenhageni (strain Fiocruz L1-130).